Here is a 277-residue protein sequence, read N- to C-terminus: Myelin proteolipid protein (277 aa).

At 1–10 (MGLLECCARC) the chain is on the cytoplasmic side. S-palmitoyl cysteine attachment occurs at residues cysteine 6, cysteine 7, and cysteine 10. Residues 11 to 36 (LVGAPFASLVATGLCFFGVALFCGCG) traverse the membrane as a helical segment. The Extracellular segment spans residues 37 to 59 (HEALTGTEKLIETYFSKNYQDYE). The helical transmembrane segment at 60–88 (YLINVIHAFQYVIYGTASFFFLYGALLLA) threads the bilayer. At 89 to 151 (EGFYTTGAVR…LGKWLGHPDK (63 aa)) the chain is on the cytoplasmic side. Cysteine 109 carries the S-palmitoyl cysteine lipid modification. Phosphoserine is present on serine 114. Phosphothreonine is present on residues threonine 116 and threonine 118. S-palmitoyl cysteine attachment occurs at residues cysteine 139 and cysteine 141. A helical membrane pass occupies residues 152 to 178 (FVGITYALTIVWLLVFACSAVPVYIYF). Residues 179–238 (NTWTTCQSIAFPSKTSASIGSLCADARMYGVLPWNAFPGKVCGSNLLSICKTAEFQMTFH) are Extracellular-facing. 2 disulfide bridges follow: cysteine 184/cysteine 228 and cysteine 201/cysteine 220. Serine 199 is lipidated: O-palmitoyl serine. The helical transmembrane segment at 239–268 (LFIAAFVGAAATLVSLLTFMIAATYNFAVL) threads the bilayer. Topologically, residues 269 to 277 (KLMGRGTKF) are cytoplasmic.

The protein belongs to the myelin proteolipid protein family.

Its subcellular location is the cell membrane. It localises to the myelin membrane. In terms of biological role, this is the major myelin protein from the central nervous system. It plays an important role in the formation or maintenance of the multilamellar structure of myelin. This Canis lupus familiaris (Dog) protein is Myelin proteolipid protein (PLP1).